The sequence spans 210 residues: ATP phosphoribosyltransferase (210 aa).

This sequence belongs to the ATP phosphoribosyltransferase family. Short subfamily. Heteromultimer composed of HisG and HisZ subunits.

It is found in the cytoplasm. The enzyme catalyses 1-(5-phospho-beta-D-ribosyl)-ATP + diphosphate = 5-phospho-alpha-D-ribose 1-diphosphate + ATP. It participates in amino-acid biosynthesis; L-histidine biosynthesis; L-histidine from 5-phospho-alpha-D-ribose 1-diphosphate: step 1/9. In terms of biological role, catalyzes the condensation of ATP and 5-phosphoribose 1-diphosphate to form N'-(5'-phosphoribosyl)-ATP (PR-ATP). Has a crucial role in the pathway because the rate of histidine biosynthesis seems to be controlled primarily by regulation of HisG enzymatic activity. This chain is ATP phosphoribosyltransferase, found in Picosynechococcus sp. (strain ATCC 27264 / PCC 7002 / PR-6) (Agmenellum quadruplicatum).